A 342-amino-acid polypeptide reads, in one-letter code: Isopentenyl-diphosphate delta-isomerase (342 aa).

Residue Arg11–Lys12 coordinates substrate. Residues Ser68, Ser69–Thr71, Ser99, and Asn127 contribute to the FMN site. Substrate is bound at residue Ser99–Arg101. Gln162 contacts substrate. Residue Glu163 coordinates Mg(2+). FMN-binding positions include Lys194, Thr224, Gly274–Lys276, and Ala295–Gly296.

This sequence belongs to the IPP isomerase type 2 family. Homooctamer. Dimer of tetramers. FMN serves as cofactor. NADPH is required as a cofactor. Requires Mg(2+) as cofactor.

The protein resides in the cytoplasm. The enzyme catalyses isopentenyl diphosphate = dimethylallyl diphosphate. Involved in the biosynthesis of isoprenoids. Catalyzes the 1,3-allylic rearrangement of the homoallylic substrate isopentenyl (IPP) to its allylic isomer, dimethylallyl diphosphate (DMAPP). This Rickettsia africae (strain ESF-5) protein is Isopentenyl-diphosphate delta-isomerase.